We begin with the raw amino-acid sequence, 262 residues long: Ribosomal RNA small subunit methyltransferase A (262 aa).

S-adenosyl-L-methionine-binding residues include His-16, Leu-18, Gly-43, Glu-64, Asp-89, and Asn-109.

Belongs to the class I-like SAM-binding methyltransferase superfamily. rRNA adenine N(6)-methyltransferase family. RsmA subfamily.

Its subcellular location is the cytoplasm. The catalysed reaction is adenosine(1518)/adenosine(1519) in 16S rRNA + 4 S-adenosyl-L-methionine = N(6)-dimethyladenosine(1518)/N(6)-dimethyladenosine(1519) in 16S rRNA + 4 S-adenosyl-L-homocysteine + 4 H(+). Specifically dimethylates two adjacent adenosines (A1518 and A1519) in the loop of a conserved hairpin near the 3'-end of 16S rRNA in the 30S particle. May play a critical role in biogenesis of 30S subunits. The sequence is that of Ribosomal RNA small subunit methyltransferase A from Xanthomonas oryzae pv. oryzae (strain MAFF 311018).